The primary structure comprises 1134 residues: Nck-associated protein 1-like (1134 aa).

The interval 638–671 (KAKNKKSMKQRQAPRKGEPERDKPGAESHRKNRS) is disordered. Residues 639–651 (AKNKKSMKQRQAP) show a composition bias toward basic residues. A compositionally biased stretch (basic and acidic residues) spans 652–666 (RKGEPERDKPGAESH). Residues 999–1019 (LLLIFLAVSLPLLATDPSSFF) form a helical membrane-spanning segment.

As to quaternary structure, in hematopoietic cells, component of the WAVE2 complex composed of ABI1, CYFIP1/SRA1, NCKAP1L/HEM1 and WASF2/WAVE2. Interacts with ARHGAP4, PIK3C3/VPS34 and PPP1R12A/MYPT1. Interacts with mammalian target of rapamycin complex 2 (mTORC2) components, including MTOR and RICTOR. Predominantly expressed in developing and mature hematopoietic cells. Also detected in urogenital tissues, including testis.

It is found in the membrane. It localises to the cytoplasm. Essential hematopoietic-specific regulator of the actin cytoskeleton. Controls lymphocyte development, activation, proliferation and homeostasis, erythrocyte membrane stability, as well as phagocytosis and migration by neutrophils and macrophages. Component of the WAVE2 complex which signals downstream of RAC to stimulate F-actin polymerization. Required for stabilization and/or translation of the WAVE2 complex proteins in hematopoietic cells. Within the WAVE2 complex, enables the cortical actin network to restrain excessive degranulation and granule release by T-cells. Required for efficient T-lymphocyte and neutrophil migration. Exhibits complex cycles of activation and inhibition to generate waves of propagating the assembly with actin. Also involved in mechanisms WAVE independent to regulate myosin and actin polymerization during neutrophil chemotaxis. In T-cells, required for proper mechanistic target of rapamycin complex 2 (mTORC2)-dependent AKT phosphorylation, cell proliferation and cytokine secretion, including that of IL2 and TNF. This is Nck-associated protein 1-like from Mus musculus (Mouse).